The chain runs to 567 residues: Oxygen-dependent choline dehydrogenase (567 aa).

6–35 (DYIIVGAGSAGNTLATRLTEDEGVTVLLLE) contributes to the FAD binding site. H475 acts as the Proton acceptor in catalysis.

It belongs to the GMC oxidoreductase family. FAD serves as cofactor.

It carries out the reaction choline + A = betaine aldehyde + AH2. The catalysed reaction is betaine aldehyde + NAD(+) + H2O = glycine betaine + NADH + 2 H(+). The protein operates within amine and polyamine biosynthesis; betaine biosynthesis via choline pathway; betaine aldehyde from choline (cytochrome c reductase route): step 1/1. Involved in the biosynthesis of the osmoprotectant glycine betaine. Catalyzes the oxidation of choline to betaine aldehyde and betaine aldehyde to glycine betaine at the same rate. The chain is Oxygen-dependent choline dehydrogenase from Pseudomonas fluorescens (strain SBW25).